A 488-amino-acid polypeptide reads, in one-letter code: Solanidine UDP-glucose glucosyltransferase 1 (488 aa).

His-23 functions as the Proton acceptor in the catalytic mechanism. His-23 provides a ligand contact to an anthocyanidin. Asp-127 serves as the catalytic Charge relay. 6 residues coordinate UDP-alpha-D-glucose: Val-352, Gln-354, His-369, Asn-373, Ser-374, and Glu-377. An anthocyanidin is bound at residue Ala-392. 2 residues coordinate UDP-alpha-D-glucose: Asp-393 and Gln-394.

The protein belongs to the UDP-glycosyltransferase family. Expressed in the shoot apical meristem (SAM) and tuber.

The enzyme catalyses solasodine + UDP-alpha-D-glucose = solasodine 3-beta-D-glucoside + UDP + H(+). It catalyses the reaction solanidine + UDP-alpha-D-glucose = solanidine 3-O-beta-D-glucopyranoside + UDP + H(+). The catalysed reaction is tomatidine + UDP-alpha-D-glucose = tomatidine 3-O-beta-D-glucopyranoside + UDP + H(+). Its function is as follows. Glucosyltransferase involved in the glucosylation of the steroidal alkaloid aglycons solanidine, solasodine and tomatidine to produce their corresponding glycoalkaloids. This is Solanidine UDP-glucose glucosyltransferase 1 from Solanum tuberosum (Potato).